We begin with the raw amino-acid sequence, 334 residues long: Tyrosine-protein kinase SRK3 (334 aa).

An SH2 domain is found at 1-42 (IRTLDDGGFYMANRISFPTLQNLVSHYMMDADGLAQRLSRPC). A Protein kinase domain is found at 66 to 321 (IQLQRKLGQG…LKNLLEDYYV (256 aa)). Residues 72-80 (LGQGNFGEV) and Lys94 contribute to the ATP site. The Proton acceptor role is filled by Asp186.

Belongs to the protein kinase superfamily. Tyr protein kinase family.

It localises to the cytoplasm. The enzyme catalyses L-tyrosyl-[protein] + ATP = O-phospho-L-tyrosyl-[protein] + ADP + H(+). This is Tyrosine-protein kinase SRK3 (SRK3) from Spongilla lacustris (Freshwater sponge).